We begin with the raw amino-acid sequence, 245 residues long: Heat shock transcription factor (245 aa).

A DNA-binding region spans residues 17–115 (KSGFVNRLYR…LISLITRDKS (99 aa)). Residues 130-169 (SLQYLASCNYKQQKEINDLKDRIKTLETKYATLYEIISNA) are involved in trimerization.

It belongs to the HSF family. In terms of assembly, homotrimer. Homotrimerization increases the affinity of HSF1 to DNA.

It localises to the nucleus. DNA-binding transcription factor that specifically binds heat shock promoter elements (HSE) and activates transcription. The polypeptide is Heat shock transcription factor (Enterocytozoon bieneusi (strain H348) (Microsporidian parasite)).